We begin with the raw amino-acid sequence, 805 residues long: Ubiquitin carboxyl-terminal hydrolase 5 (805 aa).

The 125-residue stretch at 159-283 folds into the Rhodanese domain; the sequence is HGDALLLIDV…WVKLGGAYQS (125 aa). Positions 359–380 are disordered; the sequence is RNSPTVQKFSPHPPTTLSKLNT. Positions 446 to 804 constitute a USP domain; it reads VGLENIGNCC…SAYVLFYERI (359 aa). Catalysis depends on Cys455, which acts as the Nucleophile. His761 (proton acceptor) is an active-site residue.

The protein belongs to the peptidase C19 family.

It carries out the reaction Thiol-dependent hydrolysis of ester, thioester, amide, peptide and isopeptide bonds formed by the C-terminal Gly of ubiquitin (a 76-residue protein attached to proteins as an intracellular targeting signal).. The polypeptide is Ubiquitin carboxyl-terminal hydrolase 5 (UBP5) (Saccharomyces cerevisiae (strain ATCC 204508 / S288c) (Baker's yeast)).